We begin with the raw amino-acid sequence, 231 residues long: Lipoprotein-releasing system ATP-binding protein LolD (231 aa).

The region spanning 11-231 is the ABC transporter domain; the sequence is LRLEGLTRRF…TLRDGKLVPF (221 aa). 47–54 provides a ligand contact to ATP; that stretch reads APSGTGKS.

This sequence belongs to the ABC transporter superfamily. Lipoprotein translocase (TC 3.A.1.125) family. The complex is composed of two ATP-binding proteins (LolD) and two transmembrane proteins (LolC and LolE).

The protein resides in the cell inner membrane. In terms of biological role, part of the ABC transporter complex LolCDE involved in the translocation of mature outer membrane-directed lipoproteins, from the inner membrane to the periplasmic chaperone, LolA. Responsible for the formation of the LolA-lipoprotein complex in an ATP-dependent manner. The chain is Lipoprotein-releasing system ATP-binding protein LolD from Gluconobacter oxydans (strain 621H) (Gluconobacter suboxydans).